The primary structure comprises 448 residues: O-Mevalon transferase yanI (448 aa).

N-linked (GlcNAc...) asparagine glycosylation occurs at Asn2. Transmembrane regions (helical) follow at residues 21-41 (VLLSHSLASTHYTVLAFLLAV), 54-74 (YGLLLLQITCALQAFVAPPPP), 79-96 (AVLYTSGVLMANLLARYF), 165-185 (FVTAQLLTIIAMYAGLYLVEV), 217-237 (LIVLGLALVVYSHFALFVLPL), 316-336 (MLMLITFVISGLIHTSGSYHV), 350-370 (VKYFISQAISIMIEDFGCWLL), and 390-410 (IVTAGWYFWSRVHWSVMPVAL).

It belongs to the wax synthase family.

The protein localises to the membrane. The protein operates within secondary metabolite biosynthesis; terpenoid biosynthesis. Its function is as follows. O-Mevalon transferase yanI; part of the gene cluster that mediates the biosynthesis of yanuthone D, a fungal isoprenoid epoxycyclohexenone that acts as an antibiotic against fungi and bacteria. The first step of the pathway is the synthesis of 6-methylsalicylic acid (6-MSA) by the polyketide synthase yanA. 6-MSA is then converted to m-cresol by the decarboxylase yanB. The cytochrome P450 monooxygenase yanC then catalyzes the oxidation of m-cresol to toluquinol. Epoxidation of toluquinol is then performed by the short chain dehydrogenase yanD, with the help of yanE, and a further prenylation by yanG leads to 7-deacetoxyyanuthone A. The next step is the hydroxylation of C-22 of 7-deacetoxyyanuthone A by the cytochrome P450 monooxygenase yanH to yield 22-deacetylyanuthone A. O-Mevalon transferase yanI then attaches mevalon to the hydroxyl group of 22-deacetylyanuthone A to produce yanuthone E. Finally, the FAD-dependent monooxygenase yanF oxidizes the hydroxyl group at C15 of yanuthone E to form yanuthone D. Furthermore, several branching points in the pathway lead to the production of yanuthones F and G from 7-deacetoxyyanuthone A; yanuthones H and I from 22-deacetylyanuthone A; and yanuthone J from yanuthone E. The chain is O-Mevalon transferase yanI from Aspergillus niger (strain ATCC 1015 / CBS 113.46 / FGSC A1144 / LSHB Ac4 / NCTC 3858a / NRRL 328 / USDA 3528.7).